Reading from the N-terminus, the 656-residue chain is Choline transporter-like protein 3 (656 aa).

The helical transmembrane segment at 37–57 (WLVLFFLFWTGLVFIMGYSVV) threads the bilayer. Residues asparagine 141 and asparagine 154 are each glycosylated (N-linked (GlcNAc...) asparagine). A run of 5 helical transmembrane segments spans residues 216–236 (DTIL…LFAF), 242–262 (LLIH…CGVL), 288–308 (LAFA…IFTL), 337–357 (LWTC…LLSL), and 381–401 (YMWW…LACQ). Residues asparagine 506 and asparagine 524 are each glycosylated (N-linked (GlcNAc...) asparagine). A helical transmembrane segment spans residues 537 to 557 (FVIFLGKVLVVCFSIFGGLMA). Asparagine 559 carries N-linked (GlcNAc...) asparagine glycosylation. The helical transmembrane segment at 566-586 (VWAIPLLLVAFFACVVAHSFL) threads the bilayer. The disordered stretch occupies residues 634–656 (AKSQGQKDALPNEEGTELQPIVR).

This sequence belongs to the CTL (choline transporter-like) family.

The protein resides in the membrane. This chain is Choline transporter-like protein 3 (Slc44a3), found in Mus musculus (Mouse).